We begin with the raw amino-acid sequence, 207 residues long: Urease accessory protein UreG (207 aa).

Position 16 to 23 (16 to 23 (GPVGSGKT)) interacts with GTP.

Belongs to the SIMIBI class G3E GTPase family. UreG subfamily. Homodimer. UreD, UreF and UreG form a complex that acts as a GTP-hydrolysis-dependent molecular chaperone, activating the urease apoprotein by helping to assemble the nickel containing metallocenter of UreC. The UreE protein probably delivers the nickel.

It is found in the cytoplasm. In terms of biological role, facilitates the functional incorporation of the urease nickel metallocenter. This process requires GTP hydrolysis, probably effectuated by UreG. This Cupriavidus metallidurans (strain ATCC 43123 / DSM 2839 / NBRC 102507 / CH34) (Ralstonia metallidurans) protein is Urease accessory protein UreG.